Consider the following 38-residue polypeptide: MLNGKANADFVPEMQRFYKLFYHIDLTNEQALKLFQVK.

This is an uncharacterized protein from Haemophilus influenzae (strain ATCC 51907 / DSM 11121 / KW20 / Rd).